Reading from the N-terminus, the 343-residue chain is 4-hydroxyproline 2-epimerase 1 (343 aa).

Ser90 functions as the Proton acceptor in the catalytic mechanism. Substrate contacts are provided by residues Gly91 to Ser92, Asp251, and Gly256 to Thr257.

Belongs to the proline racemase family.

The enzyme catalyses trans-4-hydroxy-L-proline = cis-4-hydroxy-D-proline. Catalyzes the epimerization of trans-4-hydroxy-L-proline (t4LHyp) to cis-4-hydroxy-D-proline (c4DHyp) in vitro, albeit with low efficiency. The physiological substrate may be different. Displays no proline racemase activity. This is 4-hydroxyproline 2-epimerase 1 from Brucella anthropi (strain ATCC 49188 / DSM 6882 / CCUG 24695 / JCM 21032 / LMG 3331 / NBRC 15819 / NCTC 12168 / Alc 37) (Ochrobactrum anthropi).